A 760-amino-acid chain; its full sequence is Serine/threonine-protein kinase dkf-1 (760 aa).

Phorbol-ester/DAG-type zinc fingers lie at residues 103–153 and 194–244; these read PHVV…GIIV and PHTL…PSNC. The PH domain maps to 316–444; the sequence is KNLEGWMIHF…QFIKESLQPP (129 aa). The Protein kinase domain occupies 464 to 725; the sequence is VLSDKTLGSG…IEKCLEHGWL (262 aa). Residues 470–478 and lysine 493 contribute to the ATP site; that span reads LGSGQFGTV. Aspartate 589 functions as the Proton acceptor in the catalytic mechanism. Residue threonine 626 is modified to Phosphothreonine.

Belongs to the protein kinase superfamily. CAMK Ser/Thr protein kinase family. PKD subfamily. Mg(2+) serves as cofactor. Prolonged phosphorylation at Thr-626 results in ubiquitination and degradation.

The protein resides in the cytoplasm. It localises to the membrane. It catalyses the reaction L-seryl-[protein] + ATP = O-phospho-L-seryl-[protein] + ADP + H(+). The enzyme catalyses L-threonyl-[protein] + ATP = O-phospho-L-threonyl-[protein] + ADP + H(+). Activated by DAG and phorbol esters. Phorbol-ester/DAG-type domain 1 binds phorbol ester with high affinity and mediates accumulation at the cell periphery. Phorbol-ester/DAG-type domain 2 binds phorbol ester with low affinity but may mediate initial contact, resulting in a conformational change allowing previously occluded domain 1 to anchor the kinase. Phosphorylation on Thr-626 is then also required for activation and may also result in a further conformational change. Converts transient diacylglycerol (DAG) signals into prolonged physiological effects, independently of PKC. Role in the regulation of growth and neuromuscular control of movement. Involved in immune response to S.aureus bacterium by activating transcription factor hlh-30 downstream of phospholipase plc-1. This chain is Serine/threonine-protein kinase dkf-1, found in Caenorhabditis briggsae.